Here is a 106-residue protein sequence, read N- to C-terminus: uncharacterized protein (106 aa).

A helical transmembrane segment spans residues Ala-85–Pro-101.

The protein localises to the membrane. This is an uncharacterized protein from Saccharomyces cerevisiae (strain ATCC 204508 / S288c) (Baker's yeast).